Here is a 108-residue protein sequence, read N- to C-terminus: U-scoloptoxin(10)-Sm1a (108 aa).

A signal peptide spans 1 to 24; it reads MNKQWLHFFSVLLLCYVIEETCSL.

The protein belongs to the scoloptoxin-10 family. Contains 3 disulfide bonds. As to expression, expressed by the venom gland.

The protein localises to the secreted. The protein is U-scoloptoxin(10)-Sm1a of Scolopendra morsitans (Tanzanian blue ringleg centipede).